Here is a 367-residue protein sequence, read N- to C-terminus: MPRPITAVIHRQALQNNLAVVRKAMPNSKVFAVVKANAYGHGIERVYEAFKAADGFALLDLEEAKRIRALGWTGPILLLEGVFSPQDLFDCVQYQLSFTIHSEAQIEWVEQHPYPAQFDVFLKMNSGMSRLGFKPQHYVQAWERLNNLANVAKITHMMHFSDADGDRFGQQGIDYQITAFEEIVKDLPGERSVSNSAAILRYQDQLKSDYVRSGIMLYGSSPDYPTHSIADWGLQPTMSLRSEIISVQHLEPNESVGYGSNFVAEQPMTIGIVACGYADGYQRISPTGTPVLVDSVRTRTVGRVSMDMLAVDLTGIESAKVGSEVVLWGQSSTGVVLPIDDVAVSSGTVGYELMCAVTARVQFINQV.

K35 functions as the Proton acceptor; specific for D-alanine in the catalytic mechanism. K35 carries the post-translational modification N6-(pyridoxal phosphate)lysine. Substrate is bound at residue R130. Y258 (proton acceptor; specific for L-alanine) is an active-site residue. Residue M306 participates in substrate binding.

The protein belongs to the alanine racemase family. Pyridoxal 5'-phosphate is required as a cofactor.

It carries out the reaction L-alanine = D-alanine. It functions in the pathway amino-acid biosynthesis; D-alanine biosynthesis; D-alanine from L-alanine: step 1/1. Its function is as follows. Catalyzes the interconversion of L-alanine and D-alanine. May also act on other amino acids. The protein is Alanine racemase (alr) of Acinetobacter baumannii (strain SDF).